We begin with the raw amino-acid sequence, 331 residues long: Low affinity immunoglobulin epsilon Fc receptor (331 aa).

The Cytoplasmic portion of the chain corresponds to 1–23 (MEENEYSGYWEPPRKRCCCARRG). 2 S-palmitoyl cysteine lipidation sites follow: C17 and C18. A helical; Signal-anchor for type II membrane protein membrane pass occupies residues 24 to 49 (TQLMLVGLLSTAMWAGLLALLLLWHW). Over 50–331 (ETEKNLKQLG…PTRPTPKSEP (282 aa)) the chain is Extracellular. N65 carries N-linked (GlcNAc...) asparagine glycosylation. 3 repeats span residues 71–91 (KDLQ…VQMS), 92–112 (QNLQ…SRLS), and 113–133 (QNLT…SKLS). An N-linked (GlcNAc...) asparagine glycan is attached at N114. Cystine bridges form between C183-C311, C186-C197, C214-C305, and C282-C296. One can recognise a C-type lectin domain in the interval 185 to 298 (ICPKNWLHFQ…GQWNDAFCRS (114 aa)). Ca(2+) contacts are provided by E272, N292, and D293. O-linked (Xyl...) (chondroitin sulfate) serine glycosylation is present at S319.

In terms of assembly, homotrimer. Interacts (via C-type lectin domain) with IGHE (via CH3 region); this interaction regulates IgE homeostasis. Interacts (via C-terminus) with CR2/CD21 (via Sushi domain 1 and 2). Post-translationally, N- and O-glycosylated.

It is found in the cell membrane. Its subcellular location is the secreted. Low-affinity receptor for immunoglobulin E (IgE) and CR2/CD21. Has essential roles in the regulation of IgE production and in the differentiation of B cells. On B cells, initiates IgE-dependent antigen uptake and presentation to T cells. On macrophages, upon IgE binding and antigen cross-linking induces intracellular killing of parasites through activation of L-Arginine-nitric oxide pathway. The polypeptide is Low affinity immunoglobulin epsilon Fc receptor (Fcer2) (Mus musculus (Mouse)).